Consider the following 149-residue polypeptide: Large ribosomal subunit protein bL9 (149 aa).

Belongs to the bacterial ribosomal protein bL9 family.

Binds to the 23S rRNA. The polypeptide is Large ribosomal subunit protein bL9 (Mannheimia succiniciproducens (strain KCTC 0769BP / MBEL55E)).